We begin with the raw amino-acid sequence, 200 residues long: Systemin (200 aa).

The interval 1 to 33 (MGTPSYDIKNKGDDMQEEPKVKLHHEKGGDEKE) is disordered. 2 consecutive propeptides follow at residues 1-178 (MGTP…REDL) and 197-200 (NNKL). Residues 3-8 (TPSYDI) form a 1; truncated repeat. Positions 8–33 (IKNKGDDMQEEPKVKLHHEKGGDEKE) are enriched in basic and acidic residues. A run of 4 repeats spans residues 37-45 (EKETPSQDI), 80-88 (EKETISQYI), 117-125 (EKETPSQDI), and 145-153 (DKETPSQDI). 2 disordered regions span residues 106 to 159 (EEEE…MEGE) and 178 to 200 (LAVQSKPPSKRDPPKMQTDNNKL). Composition is skewed to basic and acidic residues over residues 111-140 (EKEKIVEKETPSQDINNKGDDAQEKPKVEH) and 146-158 (KETPSQDIIKMEG).

All organs except the roots. Transported out of wounds to distal tissues.

It is found in the cytoplasm. Functionally, activates a lipid-based signal transduction pathway in which linolenic acid is converted to jasmonic acid, a potent activator of defense gene transcription, including proteinase inhibitor. The protein is Systemin of Solanum lycopersicum (Tomato).